Here is a 159-residue protein sequence, read N- to C-terminus: Cytochrome c-type biogenesis protein CcmE (159 aa).

Residues 1 to 23 (MNNSSLENSASLKVILKQRKKKR) are Cytoplasmic-facing. A helical; Signal-anchor for type II membrane protein membrane pass occupies residues 24 to 44 (LLIILLCCLVMAIAASLVVYA). Residues 45-159 (MRHAVSFFRM…RLKKHYSVEK (115 aa)) lie on the Periplasmic side of the membrane. Residues His138 and Tyr142 each coordinate heme.

The protein belongs to the CcmE/CycJ family.

It localises to the cell inner membrane. Its function is as follows. Heme chaperone required for the biogenesis of c-type cytochromes. Transiently binds heme delivered by CcmC and transfers the heme to apo-cytochromes in a process facilitated by CcmF and CcmH. In Bartonella tribocorum (strain CIP 105476 / IBS 506), this protein is Cytochrome c-type biogenesis protein CcmE.